Here is a 294-residue protein sequence, read N- to C-terminus: ATP synthase gamma chain (294 aa).

The protein belongs to the ATPase gamma chain family. In terms of assembly, F-type ATPases have 2 components, CF(1) - the catalytic core - and CF(0) - the membrane proton channel. CF(1) has five subunits: alpha(3), beta(3), gamma(1), delta(1), epsilon(1). CF(0) has three main subunits: a, b and c.

It is found in the cell inner membrane. In terms of biological role, produces ATP from ADP in the presence of a proton gradient across the membrane. The gamma chain is believed to be important in regulating ATPase activity and the flow of protons through the CF(0) complex. This chain is ATP synthase gamma chain, found in Campylobacter jejuni subsp. jejuni serotype O:2 (strain ATCC 700819 / NCTC 11168).